Reading from the N-terminus, the 519-residue chain is Exodeoxyribonuclease 7 large subunit (519 aa).

The tract at residues 500–519 (VGRGKTRKPKEEPPAQGSLL) is disordered.

It belongs to the XseA family. As to quaternary structure, heterooligomer composed of large and small subunits.

Its subcellular location is the cytoplasm. It carries out the reaction Exonucleolytic cleavage in either 5'- to 3'- or 3'- to 5'-direction to yield nucleoside 5'-phosphates.. Bidirectionally degrades single-stranded DNA into large acid-insoluble oligonucleotides, which are then degraded further into small acid-soluble oligonucleotides. The chain is Exodeoxyribonuclease 7 large subunit from Cereibacter sphaeroides (strain ATCC 17029 / ATH 2.4.9) (Rhodobacter sphaeroides).